The chain runs to 514 residues: Transcription termination factor Rho (514 aa).

The segment at 25-52 (EPSSTPGPARNARRSNRRMRHPDKDVDK) is disordered. Residues 35-45 (NARRSNRRMRH) are compositionally biased toward basic residues. The region spanning 141–216 (LMYGEGTLEI…LRIEAINHAD (76 aa)) is the Rho RNA-BD domain. ATP contacts are provided by residues 259 to 264 (GFGQRG), 271 to 276 (RAGKTM), and Arg302.

Belongs to the Rho family. As to quaternary structure, homohexamer. The homohexamer assembles into an open ring structure.

Functionally, facilitates transcription termination by a mechanism that involves Rho binding to the nascent RNA, activation of Rho's RNA-dependent ATPase activity, and release of the mRNA from the DNA template. The protein is Transcription termination factor Rho of Rhodopirellula baltica (strain DSM 10527 / NCIMB 13988 / SH1).